A 354-amino-acid polypeptide reads, in one-letter code: DNA polymerase IV (354 aa).

One can recognise a UmuC domain in the interval 7 to 188 (IIHVDMDCFF…LPLAKIPGVG (182 aa)). 2 residues coordinate Mg(2+): aspartate 11 and aspartate 106. Residue glutamate 107 is part of the active site.

Belongs to the DNA polymerase type-Y family. As to quaternary structure, monomer. It depends on Mg(2+) as a cofactor.

It localises to the cytoplasm. The catalysed reaction is DNA(n) + a 2'-deoxyribonucleoside 5'-triphosphate = DNA(n+1) + diphosphate. Poorly processive, error-prone DNA polymerase involved in untargeted mutagenesis. Copies undamaged DNA at stalled replication forks, which arise in vivo from mismatched or misaligned primer ends. These misaligned primers can be extended by PolIV. Exhibits no 3'-5' exonuclease (proofreading) activity. May be involved in translesional synthesis, in conjunction with the beta clamp from PolIII. This chain is DNA polymerase IV, found in Shigella boydii serotype 18 (strain CDC 3083-94 / BS512).